Reading from the N-terminus, the 146-residue chain is Putative pre-16S rRNA nuclease (146 aa).

It belongs to the YqgF nuclease family.

It localises to the cytoplasm. Could be a nuclease involved in processing of the 5'-end of pre-16S rRNA. The chain is Putative pre-16S rRNA nuclease from Methylobacillus flagellatus (strain ATCC 51484 / DSM 6875 / VKM B-1610 / KT).